The chain runs to 293 residues: Triacylglycerol lipase (293 aa).

An AB hydrolase-1 domain is found at 10–206 (PILLVHGLFG…YYSWSGIIKG (197 aa)). Leu-17 contacts substrate. The Nucleophile role is filled by Ser-83. A substrate-binding site is contributed by Gln-84. Residue Asp-217 coordinates Ca(2+). Residues Asp-238 and His-260 each act as charge relay system in the active site. Ca(2+) contacts are provided by Asp-262, His-266, and Arg-269.

Belongs to the AB hydrolase superfamily. Pseudomonas lipase family. It depends on Ca(2+) as a cofactor.

It is found in the secreted. The catalysed reaction is a triacylglycerol + H2O = a diacylglycerol + a fatty acid + H(+). Functionally, catalyzes the hydrolysis of triacylglycerols, with the highest activity with tributyrin (C4), lower activity with tricaprylin (C8), and much lower activity with triacetin (C2), trilaurin (C12) and triolein (C18). This Pseudomonas fragi protein is Triacylglycerol lipase (lips).